The following is a 385-amino-acid chain: Probable caffeine synthase MTL2 (385 aa).

8 residues coordinate S-adenosyl-L-homocysteine: tyrosine 18, cysteine 62, asparagine 67, aspartate 101, leucine 102, serine 140, phenylalanine 141, and cysteine 157. Residues tyrosine 158, histidine 161, and tryptophan 162 each contribute to the caffeine site. Residue asparagine 179 coordinates Mg(2+). Threonine 238 contributes to the caffeine binding site. Mg(2+) contacts are provided by aspartate 261, phenylalanine 263, and asparagine 264. Caffeine is bound at residue tyrosine 369.

Belongs to the methyltransferase superfamily. Type-7 methyltransferase family. The cofactor is Mg(2+).

The protein operates within alkaloid biosynthesis. In terms of biological role, may be involved in the biosynthesis of caffeine. The polypeptide is Probable caffeine synthase MTL2 (Coffea canephora (Robusta coffee)).